The chain runs to 100 residues: Integration host factor subunit alpha (100 aa).

Residues 53 to 72 are disordered; sequence FDLRDKRQRPGRNPKTGEEI.

Belongs to the bacterial histone-like protein family. In terms of assembly, heterodimer of an alpha and a beta chain.

This protein is one of the two subunits of integration host factor, a specific DNA-binding protein that functions in genetic recombination as well as in transcriptional and translational control. The polypeptide is Integration host factor subunit alpha (Stutzerimonas stutzeri (strain A1501) (Pseudomonas stutzeri)).